The following is a 296-amino-acid chain: Cobalamin trafficking protein CblD (296 aa).

Residues 1-38 (MAHVLCNRARLVSYLPGFCSLVKRVINPRAFSTAGSSG) constitute a mitochondrion transit peptide. N6-acetyllysine is present on Lys-203.

As to quaternary structure, heterodimer with MMACHC. Forms a multiprotein complex with MMACHC, MTR and MTRR.

Its subcellular location is the cytoplasm. It is found in the mitochondrion. Involved in cobalamin metabolism and trafficking. Plays a role in regulating the biosynthesis and the proportion of two coenzymes, methylcob(III)alamin (MeCbl) and 5'-deoxyadenosylcobalamin (AdoCbl). Promotes oxidation of cob(II)alamin bound to MMACHC. The processing of cobalamin in the cytosol occurs in a multiprotein complex composed of at least MMACHC, MMADHC, MTRR (methionine synthase reductase) and MTR (methionine synthase) which may contribute to shuttle safely and efficiently cobalamin towards MTR in order to produce methionine. The protein is Cobalamin trafficking protein CblD of Mus musculus (Mouse).